An 822-amino-acid polypeptide reads, in one-letter code: ATP-dependent zinc metalloprotease FtsH (822 aa).

Topologically, residues 1–76 are cytoplasmic; sequence MEFNKLELLI…NQKEPGKARK (76 aa). Polar residues predominate over residues 44-54; it reads SLDQPSDAPSN. The tract at residues 44 to 71 is disordered; sequence SLDQPSDAPSNNKKRNLDQPDNPNQKEP. A helical transmembrane segment spans residues 77 to 97; that stretch reads IIWSFIIIILVLGVLALIILS. Topologically, residues 98-251 are extracellular; sequence GFSFSATSLN…QSMSLPTSYS (154 aa). Residues 252–272 traverse the membrane as a helical segment; the sequence is FYTAASLVLSILPFILLIGII. Residues 273–822 are Cytoplasmic-facing; it reads YYSMRKMGQA…SKESSSDKKK (550 aa). Position 347 to 354 (347 to 354) interacts with ATP; it reads GPPGTGKT. His569 contacts Zn(2+). Glu570 is an active-site residue. 2 residues coordinate Zn(2+): His573 and Asp648. Over residues 758–794 the composition is skewed to basic and acidic residues; the sequence is KKELEEKKKAEDLIRKAKKESEASSKEEKEMDVEKKV. The segment at 758–822 is disordered; sequence KKELEEKKKA…SKESSSDKKK (65 aa). The segment covering 796-805 has biased composition (low complexity); the sequence is KPSASSTEPT. Positions 812-822 are enriched in basic and acidic residues; it reads PSKESSSDKKK.

In the central section; belongs to the AAA ATPase family. The protein in the C-terminal section; belongs to the peptidase M41 family. As to quaternary structure, homohexamer. Zn(2+) serves as cofactor.

The protein localises to the cell membrane. Its function is as follows. Acts as a processive, ATP-dependent zinc metallopeptidase for both cytoplasmic and membrane proteins. Plays a role in the quality control of integral membrane proteins. This Malacoplasma penetrans (strain HF-2) (Mycoplasma penetrans) protein is ATP-dependent zinc metalloprotease FtsH.